The sequence spans 1075 residues: MPKRTDINTILIIGAGPIIIGQACEFDYSGAQAVKALREEGYKVILVNSNPATIMTDPDMADVTYIEPIQWQTLEKIIEKERPDAILPTMGGQTALNCALALSKNGVLKKYGVELIGATEDAIDKAEDRGRFKDAMTKIGLNTPKSFICHSFEEAWQAQEQVGFPTLIRPSFTMGGSGGGIAYNRDEFQAICERGFEASPTHELLIEQSVLGWKEYEMEVVRDKADNCIIVCSIENFDPMGVHTGDSITVAPAQTLTDKEYQIMRNASLAVLREIGVDTGGSNVQFAINPANGEMIVIEMNPRVSRSSALASKATGFPIAKVAAKLAVGYTLNELRNDITGGLIPTSFEPTIDYVVTKVPRFAFEKFPQADDRLTTQMKSVGEVMAMGRTFQESLQKALRGLEIGICGFNLRSESPETIRRELANPGPNRILYVADAFGAGFSLEEVHHYSKIDPWFLIQIQDLVQEEMALEKRAFTELDYAELRRLKRKGFSDKRIAQLIKVSESDVRAKRYALNLHPVYKRVDTCAGEFKADTAYLYSTYEDECEAKPTTRQKVMILGGGPNRIGQGIEFDYCCVHAALALREAGFETIMVNCNPETVSTDFDTSDRLYFEPLTLEDVLEIIYKEQPWGVIVHYGGQTPLKLAHALEQNGVNIIGTSADSIDAAEDRARFQKILTDLGLKQPNNRTARNAEEAVKLAEEVGYPLVVRPSYVLGGRAMQIVYNVDELNNYMQEAVSVSNDSPILLDHFLKNAIEVDVDCICDSEQVLIGGIMQHVEQAGIHSGDSACSLPAYSLTNEVQGEIRRQTSAMAFALGVKGLMNVQFAVQNETIYVLEVNPRASRTVPFVSKATGNPLAKIAALVMAGKSLAEQNATTEIIPPYFSVKEAVFPFIKFPGVDTTLSPEMRSTGEVMGTGQSFAEAYYKAQLGAGERIPSTGKVFLSIADEDKPQIIRVAQYLQAEGYGLCATIGTAQYLRENGVGVQIINKVREGRPNIVDSIKNNEIAMIINTVNNLPESIKEAQEIRRNALKLHIPTYTTLAAAEAISEAVRHINKYDVNALQQLHLSSALANQITR.

The carboxyphosphate synthetic domain stretch occupies residues 1–403; it reads MPKRTDINTI…SLQKALRGLE (403 aa). Residues Arg129, Arg169, Gly175, Gly176, Gln208, Val210, Glu215, Gly241, Val242, His243, Gln285, and Glu299 each coordinate ATP. One can recognise an ATP-grasp 1 domain in the interval 133–328; that stretch reads KDAMTKIGLN…IAKVAAKLAV (196 aa). 3 residues coordinate Mg(2+): Gln285, Glu299, and Asn301. Positions 285, 299, and 301 each coordinate Mn(2+). The oligomerization domain stretch occupies residues 404-548; that stretch reads IGICGFNLRS…YSTYEDECEA (145 aa). A carbamoyl phosphate synthetic domain region spans residues 549–930; sequence KPTTRQKVMI…AYYKAQLGAG (382 aa). Residues 673–864 enclose the ATP-grasp 2 domain; it reads QKILTDLGLK…LAKIAALVMA (192 aa). The ATP site is built by Arg709, His748, Leu750, Glu755, Gly780, Ile781, His782, Ser783, Gln823, and Glu835. Mg(2+) is bound by residues Gln823, Glu835, and Asn837. Mn(2+) contacts are provided by Gln823, Glu835, and Asn837. One can recognise an MGS-like domain in the interval 931–1070; that stretch reads ERIPSTGKVF…QQLHLSSALA (140 aa). An allosteric domain region spans residues 931–1075; it reads ERIPSTGKVF…SSALANQITR (145 aa).

It belongs to the CarB family. Composed of two chains; the small (or glutamine) chain promotes the hydrolysis of glutamine to ammonia, which is used by the large (or ammonia) chain to synthesize carbamoyl phosphate. Tetramer of heterodimers (alpha,beta)4. The cofactor is Mg(2+). Mn(2+) is required as a cofactor.

It catalyses the reaction hydrogencarbonate + L-glutamine + 2 ATP + H2O = carbamoyl phosphate + L-glutamate + 2 ADP + phosphate + 2 H(+). The catalysed reaction is hydrogencarbonate + NH4(+) + 2 ATP = carbamoyl phosphate + 2 ADP + phosphate + 2 H(+). The protein operates within amino-acid biosynthesis; L-arginine biosynthesis; carbamoyl phosphate from bicarbonate: step 1/1. Its pathway is pyrimidine metabolism; UMP biosynthesis via de novo pathway; (S)-dihydroorotate from bicarbonate: step 1/3. In terms of biological role, large subunit of the glutamine-dependent carbamoyl phosphate synthetase (CPSase). CPSase catalyzes the formation of carbamoyl phosphate from the ammonia moiety of glutamine, carbonate, and phosphate donated by ATP, constituting the first step of 2 biosynthetic pathways, one leading to arginine and/or urea and the other to pyrimidine nucleotides. The large subunit (synthetase) binds the substrates ammonia (free or transferred from glutamine from the small subunit), hydrogencarbonate and ATP and carries out an ATP-coupled ligase reaction, activating hydrogencarbonate by forming carboxy phosphate which reacts with ammonia to form carbamoyl phosphate. The protein is Carbamoyl phosphate synthase large chain of Haemophilus ducreyi (strain 35000HP / ATCC 700724).